The chain runs to 131 residues: Small ribosomal subunit protein uS8 (131 aa).

Belongs to the universal ribosomal protein uS8 family. Part of the 30S ribosomal subunit. Contacts proteins S5 and S12.

In terms of biological role, one of the primary rRNA binding proteins, it binds directly to 16S rRNA central domain where it helps coordinate assembly of the platform of the 30S subunit. The polypeptide is Small ribosomal subunit protein uS8 (Sulfurovum sp. (strain NBC37-1)).